The following is a 459-amino-acid chain: Prenyltransferase penI (459 aa).

Residues 107–108 (VV) and Glu111 contribute to the L-tryptophan site. Positions 126, 276, 278, 280, and 384 each coordinate substrate.

This sequence belongs to the tryptophan dimethylallyltransferase family.

It carries out the reaction quinolinone B + dimethylallyl diphosphate = peniprequinolone + diphosphate. It participates in secondary metabolite biosynthesis. The protein operates within alkaloid biosynthesis. Its pathway is mycotoxin biosynthesis. Functionally, prenyltransferase; part of the gene cluster that mediates the biosynthesis of penigequinolones, potent insecticidal alkaloids that contain a highly modified 10-carbon prenyl group. The first stage is catalyzed by the nonribosomal peptide synthetase penN that condenses anthranilic acid and O-methyl-L-tyrosine to produce 4'-methoxycyclopeptin. 4'-methoxycyclopeptin is then converted to 4'-methoxydehydrocyclopeptin by the ketoglutarate-dependent dioxygenase penM through dehydrogenation to form a double bond between C-alpha and C-beta of the O-methyltyrosine side chain. PenM also converts its first product methoxydehydrocyclopeptin to 4'-methoxycyclopenin. The following conversion of 4'methoxycyclopenin into 4'-methoxyviridicatin is catalyzed by the cyclopenase penL. 4'-methoxyviridicatin is the precursor of quinolone natural products, and is further converted to quinolinone B. The prenyltransferase penI then catalyzes the canonical Friedel-Crafts alkylation of quinolinone B with dimethylallyl cation to yield dimethylallyl quinolone, which is subjected to FAD-dependent dehydrogenation by the FAD-linked oxidoreductase penH to yield conjugated aryl diene. The delta(3') double bond then serves as the site of the second alkylation with DMAPP catalyzed by the prenyltransferase penG to yield a carbenium ion intermediate, which can be attacked by H(2)O to yield a styrenyl quinolone containing a C3'-hydroxyprenyl chain, or undergo cyclization to yield yaequinolones J1 and J2. The conversion of the styrenyl quinolone into the tetrahydrofuran-containing yaequinolone C is performed by the FAD-dependent monooxygenase penE and involves epoxidation of the terminal C7'-C8' olefin, followed by epoxide ring opening initiated by the C3' hydroxyl group. The predicted cysteine hydrolase penJ acts as an epoxide hydrolase that enhances the rate of the 5-exo-tet cyclization step, increasing the yield of yaequinolone C. PenF catalyzes the cationic rearrangement of the epoxide formed by penE (before ring opening to produce yaequinolone C) into yaequinolone D. Finally, the short-chain dehydrogenase/reductase (SDR)-like reductase penD, catalyzes both the dehydration of yaequinolone D and the reduction of the resulting oxonium to yield penigequinolone. This Penicillium thymicola protein is Prenyltransferase penI.